The sequence spans 246 residues: Polyhedrin (246 aa).

This sequence belongs to the polyhedrin family.

Major component of the virus occlusion bodies, which are large proteinaceous structures (polyhedra), that protect the virus from the outside environment for extended periods until they are ingested by insect larvae. The polypeptide is Polyhedrin (PH) (Lepidoptera (butterflies and moths)).